Reading from the N-terminus, the 220-residue chain is Iron-sulfur cluster repair protein YtfE (220 aa).

The protein belongs to the RIC family. YtfE subfamily. In terms of assembly, homodimer.

It is found in the cytoplasm. Functionally, di-iron-containing protein involved in the repair of iron-sulfur clusters damaged by oxidative and nitrosative stress conditions. This chain is Iron-sulfur cluster repair protein YtfE, found in Shigella boydii serotype 18 (strain CDC 3083-94 / BS512).